The primary structure comprises 878 residues: Probable receptor-like protein kinase At4g39110 (878 aa).

Residues methionine 1–alanine 43 form the signal peptide. The Extracellular portion of the chain corresponds to alanine 44–glycine 440. Asparagine 170, asparagine 183, asparagine 254, asparagine 317, and asparagine 382 each carry an N-linked (GlcNAc...) asparagine glycan. The helical transmembrane segment at methionine 441–valine 461 threads the bilayer. Residues tyrosine 462 to arginine 878 are Cytoplasmic-facing. The Protein kinase domain maps to phenylalanine 526–alanine 798. ATP-binding positions include isoleucine 532–valine 540 and lysine 554. The Proton acceptor role is filled by aspartate 650. The interval glycine 808 to alanine 844 is disordered.

Belongs to the protein kinase superfamily. Ser/Thr protein kinase family.

It localises to the membrane. This Arabidopsis thaliana (Mouse-ear cress) protein is Probable receptor-like protein kinase At4g39110.